The sequence spans 698 residues: Na(+)/H(+) antiporter NhaS5 (698 aa).

The next 12 membrane-spanning stretches (helical) occupy residues 10-30 (SNPLIDFTILLLVTLILPPIF), 35-55 (LPGLVGLLFAGIVLGKSGLGV), 65-85 (LFTDIGKIYLMFVAGLEIDMV), 100-120 (LTFAVPLLTGLAVGLTFGYSF), 121-141 (NASVLLGSLFASHTLLGYPIV), 156-176 (IGATIFTDIAALLVLAICISI), 184-204 (AGLVVQLVAIAVYSALVLIGF), 222-242 (QFLFVLLAVFLASVGSELINV), 275-295 (LFIPFFFIGIGLLLDLPAFLV), 300-320 (LFPLVVAIVVGLILSKGVAAI), 333-353 (GLTMWSLSIPQVAATLAAAVA), and 370-390 (VLNTIIVLMLITSIVGPLMTA).

It belongs to the monovalent cation:proton antiporter 2 (CPA2) transporter (TC 2.A.37) family.

Its subcellular location is the membrane. Functionally, na(+)/H(+) antiporter. The protein is Na(+)/H(+) antiporter NhaS5 (nhaS5) of Synechocystis sp. (strain ATCC 27184 / PCC 6803 / Kazusa).